A 204-amino-acid chain; its full sequence is Protein FAM167A (204 aa).

Positions glycine 58 to proline 80 are disordered. Positions leucine 113 to threonine 146 form a coiled coil.

This sequence belongs to the FAM167 (SEC) family.

This Danio rerio (Zebrafish) protein is Protein FAM167A (fam167a).